The following is a 182-amino-acid chain: Signal peptidase I (182 aa).

Residues 1-13 lie on the Cytoplasmic side of the membrane; that stretch reads MTKQKEKRGRRWP. A helical membrane pass occupies residues 14–30; it reads WFVAVCVVATLRLFVFS. Over 31-182 the chain is Extracellular; that stretch reads NYVVEGKSMM…WPFKQFAFQF (152 aa). Active-site residues include S38 and K79.

The protein belongs to the peptidase S26 family.

It localises to the cell membrane. It carries out the reaction Cleavage of hydrophobic, N-terminal signal or leader sequences from secreted and periplasmic proteins.. The sequence is that of Signal peptidase I (lepB) from Bacillus caldolyticus.